The chain runs to 182 residues: Negative transcriptional regulator PadR (182 aa).

This sequence belongs to the PadR family. Homodimer.

It is found in the cytoplasm. PadR repressor activity is inhibited in the presence of phenolic acids, which directly modulate PadR binding to the promoter of padC, leading to the dissociation of PadR from the operator DNA and expression of padC. In the presence of MgCl(2), binding is not altered by phenolic acids. In terms of biological role, transcriptional regulator involved in the regulation of the metabolism of phenolic acids. In the absence of phenolic acids, represses the expression of padC, which encodes a phenolic acid decarboxylase (PAD) involved in the detoxification of harmful phenolic acids. Acts by binding to the padC promoter region, preventing the transcription of the gene. The protein is Negative transcriptional regulator PadR of Bacillus subtilis (strain 168).